The sequence spans 119 residues: Large ribosomal subunit protein uL14c (119 aa).

The protein belongs to the universal ribosomal protein uL14 family. Part of the 50S ribosomal subunit.

The protein localises to the plastid. It localises to the chloroplast. Binds to 23S rRNA. The polypeptide is Large ribosomal subunit protein uL14c (Ostreococcus tauri).